A 434-amino-acid polypeptide reads, in one-letter code: Asparagine--tRNA ligase (434 aa).

It belongs to the class-II aminoacyl-tRNA synthetase family.

Its subcellular location is the cytoplasm. The catalysed reaction is tRNA(Asn) + L-asparagine + ATP = L-asparaginyl-tRNA(Asn) + AMP + diphosphate + H(+). In Pyrococcus abyssi (strain GE5 / Orsay), this protein is Asparagine--tRNA ligase.